Consider the following 473-residue polypeptide: Cysteine--tRNA ligase (473 aa).

Residue Cys-28 participates in Zn(2+) binding. Residues 30-40 carry the 'HIGH' region motif; sequence MTVYDYCHLGH. 3 residues coordinate Zn(2+): Cys-209, His-234, and Glu-238. The 'KMSKS' region signature appears at 282–286; the sequence is KMSKS. ATP is bound at residue Lys-285.

Belongs to the class-I aminoacyl-tRNA synthetase family. In terms of assembly, monomer. Zn(2+) is required as a cofactor.

Its subcellular location is the cytoplasm. The enzyme catalyses tRNA(Cys) + L-cysteine + ATP = L-cysteinyl-tRNA(Cys) + AMP + diphosphate. The polypeptide is Cysteine--tRNA ligase (Neisseria gonorrhoeae (strain ATCC 700825 / FA 1090)).